Reading from the N-terminus, the 510-residue chain is Ninja-family protein mc410 (510 aa).

Disordered stretches follow at residues 1–179 (MDEN…RQIL), 323–414 (HPSH…PSEF), and 481–510 (RHASVEQTSQEPGTGVSSFPSSNPAASAQS). Composition is skewed to basic and acidic residues over residues 31–44 (SKVEEVDRDGKVIN) and 103–146 (RPVE…DKTR). Polar residues predominate over residues 148 to 160 (SHISITTDEGSTA). Composition is skewed to basic and acidic residues over residues 363–389 (RAMEHVKGNGRQHKAEETSNSRGEENV) and 397–406 (RAKDPPDQPR). Residues 485 to 496 (VEQTSQEPGTGV) are compositionally biased toward polar residues. A compositionally biased stretch (low complexity) spans 497 to 510 (SSFPSSNPAASAQS).

It belongs to the Ninja family.

Its subcellular location is the nucleus. The protein is Ninja-family protein mc410 (MC410) of Nicotiana tabacum (Common tobacco).